Consider the following 307-residue polypeptide: Dihydroorotate dehydrogenase A (fumarate) (307 aa).

Residues Ser21 and 46–47 each bind FMN; that span reads KT. Residues Lys46, 70-74, and Asn130 each bind substrate; that span reads NSVGL. Asn130 contributes to the FMN binding site. Catalysis depends on Cys133, which acts as the Nucleophile. Lys168 and Ile194 together coordinate FMN. 195-196 is a binding site for substrate; it reads NT. FMN is bound by residues Gly220, 246 to 247, and 268 to 269; these read GG and GS.

This sequence belongs to the dihydroorotate dehydrogenase family. Type 1 subfamily. Homodimer. FMN is required as a cofactor.

The protein resides in the cytoplasm. The catalysed reaction is (S)-dihydroorotate + fumarate = orotate + succinate. Its pathway is pyrimidine metabolism; UMP biosynthesis via de novo pathway. Functionally, catalyzes the conversion of dihydroorotate to orotate with fumarate as the electron acceptor. This is Dihydroorotate dehydrogenase A (fumarate) (pyrD) from Lactobacillus helveticus (strain DPC 4571).